Reading from the N-terminus, the 121-residue chain is Large ribosomal subunit protein P2 (121 aa).

The segment covering 72 to 99 (VAVPSGGAPAAATAAAEAPKGGDKAAAP) has biased composition (low complexity). The disordered stretch occupies residues 72 to 121 (VAVPSGGAPAAATAAAEAPKGGDKAAAPPKEEKKEESEESDADMGFSPFD).

The protein belongs to the eukaryotic ribosomal protein P1/P2 family. As to quaternary structure, P1 and P2 exist as dimers at the large ribosomal subunit. Post-translationally, phosphorylated.

Its function is as follows. Plays an important role in the elongation step of protein synthesis. In Taenia solium (Pork tapeworm), this protein is Large ribosomal subunit protein P2.